We begin with the raw amino-acid sequence, 91 residues long: Small ribosomal subunit protein uS15 (91 aa).

It belongs to the universal ribosomal protein uS15 family. In terms of assembly, part of the 30S ribosomal subunit. Forms a bridge to the 50S subunit in the 70S ribosome, contacting the 23S rRNA.

Functionally, one of the primary rRNA binding proteins, it binds directly to 16S rRNA where it helps nucleate assembly of the platform of the 30S subunit by binding and bridging several RNA helices of the 16S rRNA. Forms an intersubunit bridge (bridge B4) with the 23S rRNA of the 50S subunit in the ribosome. The sequence is that of Small ribosomal subunit protein uS15 from Rickettsia africae (strain ESF-5).